The primary structure comprises 200 residues: Probable GTP-binding protein EngB (200 aa).

The 175-residue stretch at 26-200 folds into the EngB-type G domain; that stretch reads SIPEIAIAGR…IYEIAQCIKK (175 aa). GTP-binding positions include 34–41, 61–65, 80–83, 147–150, and 179–181; these read GRSNVGKS, GCTKQ, DLPG, TKID, and TSS. Mg(2+)-binding residues include Ser41 and Thr63.

The protein belongs to the TRAFAC class TrmE-Era-EngA-EngB-Septin-like GTPase superfamily. EngB GTPase family. The cofactor is Mg(2+).

Functionally, necessary for normal cell division and for the maintenance of normal septation. In Ehrlichia chaffeensis (strain ATCC CRL-10679 / Arkansas), this protein is Probable GTP-binding protein EngB.